The sequence spans 73 residues: Cytoplasmic envelopment protein 3 (73 aa).

Gly-2 carries the N-myristoyl glycine; by host lipid modification.

It belongs to the herpesviridae cytoplasmic envelopment protein 3 family. Interacts with cytoplasmic envelopment protein 2; this interaction is essential for the proper localization of each protein to the assembly complex and thus for the production of infectious virus. Post-translationally, myristoylation and palmitoylation (probably on one or more of the nearby cysteines at the N-terminus) enable membrane-binding and Golgi apparatus-specific targeting and are essential for efficient packaging. Phosphorylated. Phosphorylation does not seem to be required for recycling to the host Golgi apparatus. Packaging is selective for underphosphorylated forms.

It is found in the virion tegument. The protein localises to the virion membrane. The protein resides in the host cell membrane. Its subcellular location is the host Golgi apparatus membrane. Functionally, plays an important role in the cytoplasmic envelopment of tegument proteins and capsids during the assembly and egress processes. Also participates in viral entry at the fusion step probably by regulating the core fusion machinery. This chain is Cytoplasmic envelopment protein 3 (U71), found in Homo sapiens (Human).